Here is a 662-residue protein sequence, read N- to C-terminus: p-hydroxybenzoic acid efflux pump subunit AaeB (662 aa).

11 consecutive transmembrane segments (helical) span residues 22-42 (FAFKLSFAIVLSLFLGFHLQL), 52-72 (AAIVAAGPAFAAGGEPFSGAI), 76-96 (GMLRIIGTFIGCIGALVIIIA), 102-122 (VVMLMLCCIWAGLCTWVSSLV), 129-149 (IFGLAGYTALIIIVSTQGTPL), 161-181 (EIVLGIVCAILADLLFSPRSI), 378-398 (LFWLSTGWTSGSVCMVMIAVV), 415-435 (FLFGTIYALPLGALMFMFIMP), 439-459 (QSMLLLCLSLGGMAFFLGLEV), 465-485 (GSLGALASTINILVLDNPMTF), and 491-511 (LDSAIGQIIGCFLALMVIMLI).

It belongs to the aromatic acid exporter ArAE (TC 2.A.85) family.

The protein localises to the cell inner membrane. Forms an efflux pump with AaeA. Could function as a metabolic relief valve, allowing to eliminate certain compounds when they accumulate to high levels in the cell. The polypeptide is p-hydroxybenzoic acid efflux pump subunit AaeB (Pectobacterium atrosepticum (strain SCRI 1043 / ATCC BAA-672) (Erwinia carotovora subsp. atroseptica)).